The chain runs to 72 residues: Sec-independent protein translocase protein TatA (72 aa).

The helical transmembrane segment at 1 to 21 threads the bilayer; it reads MAGLSIWHVVIFAIVVILLFG. A disordered region spans residues 47-72; the sequence is DEAASLNSPRTIDAQVKTSESTSVKS. Residues 51-72 are compositionally biased toward polar residues; the sequence is SLNSPRTIDAQVKTSESTSVKS.

Belongs to the TatA/E family. As to quaternary structure, the Tat system comprises two distinct complexes: a TatABC complex, containing multiple copies of TatA, TatB and TatC subunits, and a separate TatA complex, containing only TatA subunits. Substrates initially bind to the TatABC complex, which probably triggers association of the separate TatA complex to form the active translocon.

The protein resides in the cell inner membrane. Functionally, part of the twin-arginine translocation (Tat) system that transports large folded proteins containing a characteristic twin-arginine motif in their signal peptide across membranes. TatA could form the protein-conducting channel of the Tat system. In Acinetobacter baumannii (strain AB307-0294), this protein is Sec-independent protein translocase protein TatA.